Reading from the N-terminus, the 579-residue chain is Capsid vertex component 2 (579 aa).

The segment at 1-50 (MTARYGFGSISFPNKCGIFLSTTKNFIAPNFPIHYWTAPAFELRGRMNPD) is interaction with major capsid protein/MCP.

This sequence belongs to the herpesviridae CVC2 protein family. Heterodimerizes with CVC1. Interacts with major capsid protein/MCP and triplex capsid protein 1/TRX1 at the pentamer vertices. Interacts with the large tegument protein/LTP.

It is found in the virion. It localises to the host nucleus. Its function is as follows. Capsid vertex-specific component that plays a role during viral DNA encapsidation, assuring correct genome cleavage and presumably stabilizing capsids that contain full-length viral genomes. Participates in the interaction between the capsid and the tegument through interaction with the large tegument protein/LTP. The chain is Capsid vertex component 2 from Homo sapiens (Human).